Consider the following 561-residue polypeptide: Probable galacturonosyltransferase 9 (561 aa).

The Cytoplasmic segment spans residues Met-1–Arg-27. The chain crosses the membrane as a helical; Signal-anchor for type II membrane protein span at residues Ile-28–Ser-48. Topologically, residues Ser-49–Leu-561 are lumenal. Asn-124, Asn-320, Asn-346, and Asn-426 each carry an N-linked (GlcNAc...) asparagine glycan.

Belongs to the glycosyltransferase 8 family. In terms of tissue distribution, expressed in roots, inflorescences, siliques, leaves and stems.

The protein localises to the golgi apparatus membrane. The protein operates within glycan metabolism; pectin biosynthesis. May be involved in pectin synthesis. This Arabidopsis thaliana (Mouse-ear cress) protein is Probable galacturonosyltransferase 9 (GAUT9).